Here is a 344-residue protein sequence, read N- to C-terminus: MSETAVVEQPNDEVSTEKINASSVGDTIKSTELTADQKDKLEKLIGAVPEILKKTDNPKYDEIFGYCINVDTNEHVDVSIRNEILLKFLVADEYDVETAKTRLVNTLNWRNKFQPLSAAYEEEFDQELDQLGVITGNPDGNSNMKYVTWNLYGKLKNPKKVFQQYGGEGESKVGAKEGTQFLRWRIGIMEKSLSFADFTDPSNNKIAQVHDYNNVSMLRMDPNVKASTKQIISIFGANYPELLSVKFFINVPVFMGWVFSFLKKMGIISAETLKKFQVLSNGNLSEWFGKDNLPAEYNGGKSTKFSSLEALAEATPEHDIPVYAKIILAQTKDQVIEDTNLSVD.

The region spanning 139–305 (DGNSNMKYVT…EYNGGKSTKF (167 aa)) is the CRAL-TRIO domain. Positions 152, 185, 210, 212, and 246 each coordinate heme.

Belongs to the SFH5 family. Heme b serves as cofactor.

The protein resides in the cytoplasm. Its subcellular location is the endoplasmic reticulum membrane. It is found in the microsome membrane. It carries out the reaction a 1,2-diacyl-sn-glycero-3-phospho-(1D-myo-inositol)(in) = a 1,2-diacyl-sn-glycero-3-phospho-(1D-myo-inositol)(out). Functionally, non-classical phosphatidylinositol (PtdIns) transfer protein (PITP), which exhibits PtdIns-binding/transfer activity in the absence of detectable PtdCho-binding/transfer activity. Regulates PtdIns(4,5)P2 homeostasis at the plasma membrane. Heme-binding protein that may play a role in organic oxidant-induced stress responses. This chain is Phosphatidylinositol transfer protein SFH5 (SFH5), found in Debaryomyces hansenii (strain ATCC 36239 / CBS 767 / BCRC 21394 / JCM 1990 / NBRC 0083 / IGC 2968) (Yeast).